The following is an 87-amino-acid chain: Small ribosomal subunit protein bS20 (87 aa).

Residues 1 to 27 are compositionally biased toward basic residues; it reads MANIKSAKKRALQSERRRQHNASRRSM. The tract at residues 1–31 is disordered; that stretch reads MANIKSAKKRALQSERRRQHNASRRSMTRTS.

The protein belongs to the bacterial ribosomal protein bS20 family.

In terms of biological role, binds directly to 16S ribosomal RNA. The protein is Small ribosomal subunit protein bS20 of Pseudoalteromonas atlantica (strain T6c / ATCC BAA-1087).